A 437-amino-acid chain; its full sequence is Serine hydroxymethyltransferase (437 aa).

Residues leucine 130 and 134–136 (GHL) each bind (6S)-5,6,7,8-tetrahydrofolate. At lysine 239 the chain carries N6-(pyridoxal phosphate)lysine.

It belongs to the SHMT family. As to quaternary structure, homodimer. Pyridoxal 5'-phosphate serves as cofactor.

It localises to the cytoplasm. It catalyses the reaction (6R)-5,10-methylene-5,6,7,8-tetrahydrofolate + glycine + H2O = (6S)-5,6,7,8-tetrahydrofolate + L-serine. Its pathway is one-carbon metabolism; tetrahydrofolate interconversion. The protein operates within amino-acid biosynthesis; glycine biosynthesis; glycine from L-serine: step 1/1. Functionally, catalyzes the reversible interconversion of serine and glycine with tetrahydrofolate (THF) serving as the one-carbon carrier. This reaction serves as the major source of one-carbon groups required for the biosynthesis of purines, thymidylate, methionine, and other important biomolecules. Also exhibits THF-independent aldolase activity toward beta-hydroxyamino acids, producing glycine and aldehydes, via a retro-aldol mechanism. The chain is Serine hydroxymethyltransferase from Bartonella quintana (strain Toulouse) (Rochalimaea quintana).